The chain runs to 489 residues: Poly(A) RNA polymerase GLD2 (489 aa).

Residues 93–118 are disordered; sequence RQRFSCPSPHNQSARNSNFTSQPVTR. A compositionally biased stretch (polar residues) spans 100–116; the sequence is SPHNQSARNSNFTSQPV. The Mg(2+) site is built by D219 and D221. The PAP-associated domain maps to 386–440; it reads SLGDLFLGFLRYYATVFKWDKQVISVRMARTLPKSNCKEWKDKFICVEEPFNRTN.

Belongs to the DNA polymerase type-B-like family. GLD2 subfamily. It depends on Mg(2+) as a cofactor. Mn(2+) is required as a cofactor.

Its subcellular location is the cytoplasm. It catalyses the reaction RNA(n) + ATP = RNA(n)-3'-adenine ribonucleotide + diphosphate. In terms of biological role, cytoplasmic poly(A) RNA polymerase that adds successive AMP monomers to the 3'-end of specific RNAs, forming a poly(A) tail. In contrast to the canonical nuclear poly(A) RNA polymerase, it only adds poly(A) to selected cytoplasmic mRNAs. May not play a role in replication-dependent histone mRNA degradation. This Danio rerio (Zebrafish) protein is Poly(A) RNA polymerase GLD2.